Consider the following 871-residue polypeptide: Metabotropic glutamate receptor 6 (871 aa).

An N-terminal signal peptide occupies residues 1 to 23 (MGRLRVLLLWLAWWLSQAGIAHG). Residues 24–579 (AGSVRLAGGL…VVRLTWSSPW (556 aa)) lie on the Extracellular side of the membrane. Cysteines 51 and 93 form a disulfide. L-glutamate contacts are provided by residues S148, 169 to 171 (AST), and Y219. Intrachain disulfides connect C238/C530, C361/C377, C417/C424, C512/C531, C516/C534, C537/C549, and C552/C565. N-linked (GlcNAc...) asparagine glycosylation is present at N290. D301 serves as a coordination point for L-glutamate. Position 394 (K394) interacts with L-glutamate. N445 and N473 each carry an N-linked (GlcNAc...) asparagine glycan. The N-linked (GlcNAc...) asparagine glycan is linked to N561. The helical transmembrane segment at 580–602 (AALPLLLAVLGIMATTTIIATFM) threads the bilayer. Residues 603–616 (RHNDTPIVRASGRE) are Cytoplasmic-facing. A helical transmembrane segment spans residues 617–637 (LSYVLLTGIFLIYAITFLMVA). At 638 to 648 (EPCAAVCASRR) the chain is on the extracellular side. The chain crosses the membrane as a helical span at residues 649-667 (LLLGLGTTLSYSALLTKTN). Topologically, residues 668 to 691 (RIYRIFEQGKRSVTPPPFISPTSQ) are cytoplasmic. Residues 692-712 (LVITFGLTSLQVVGVIAWLGA) form a helical membrane-spanning segment. Residues 713-742 (QPPHSVIDYEEQRTVDPEQARGVLKCDMSD) are Extracellular-facing. Residues 743–764 (LSLIGCLGYSLLLMVTCTVYAI) traverse the membrane as a helical segment. Over 765–777 (KARGVPETFNEAK) the chain is Cytoplasmic. A helical transmembrane segment spans residues 778–800 (PIGFTMYTTCIIWLAFVPIFFGT). The Extracellular segment spans residues 801-813 (AQSAEKIYIQTTT). A helical transmembrane segment spans residues 814-839 (LTVSLSLSASVSLGMLYVPKTYVILF). The Cytoplasmic segment spans residues 840-871 (HPEQNVQKRKRSLKKTSTMAAPPKSENSEDAK). The tract at residues 848-871 (RKRSLKKTSTMAAPPKSENSEDAK) is disordered.

Belongs to the G-protein coupled receptor 3 family. As to quaternary structure, homodimer. Interacts with GPR179. Interacts with photoreceptor synaptic protein LRIT1 (via its N-terminal extracellular domain). As to expression, detected in the outer plexiform layer in retina (at protein level).

Its subcellular location is the cell membrane. It localises to the endoplasmic reticulum membrane. The protein resides in the golgi apparatus membrane. The protein localises to the cell projection. It is found in the dendrite. G-protein coupled receptor for glutamate. Ligand binding causes a conformation change that triggers signaling via guanine nucleotide-binding proteins (G proteins) and modulates the activity of down-stream effectors, such as adenylate cyclase. Signaling inhibits adenylate cyclase activity. Signaling stimulates TRPM1 channel activity and Ca(2+) uptake. Required for normal vision. This is Metabotropic glutamate receptor 6 (Grm6) from Mus musculus (Mouse).